Consider the following 130-residue polypeptide: Small ribosomal subunit protein uS11 (130 aa).

It belongs to the universal ribosomal protein uS11 family. Part of the 30S ribosomal subunit. Interacts with proteins S7 and S18. Binds to IF-3.

Located on the platform of the 30S subunit, it bridges several disparate RNA helices of the 16S rRNA. Forms part of the Shine-Dalgarno cleft in the 70S ribosome. The polypeptide is Small ribosomal subunit protein uS11 (Prochlorococcus marinus (strain NATL1A)).